We begin with the raw amino-acid sequence, 188 residues long: dCTP deaminase (188 aa).

DCTP is bound by residues 111-116 (KSTYAR), 135-137 (TLE), Q156, Y170, and Q180. The Proton donor/acceptor role is filled by E137.

It belongs to the dCTP deaminase family. Homotrimer.

The enzyme catalyses dCTP + H2O + H(+) = dUTP + NH4(+). It participates in pyrimidine metabolism; dUMP biosynthesis; dUMP from dCTP (dUTP route): step 1/2. Functionally, catalyzes the deamination of dCTP to dUTP. The protein is dCTP deaminase of Cupriavidus necator (strain ATCC 17699 / DSM 428 / KCTC 22496 / NCIMB 10442 / H16 / Stanier 337) (Ralstonia eutropha).